Consider the following 257-residue polypeptide: NAD-capped RNA hydrolase NudC (257 aa).

K25 and R69 together coordinate substrate. C98 and C101 together coordinate Zn(2+). A substrate-binding site is contributed by E111. Zn(2+) is bound by residues C116 and C119. Substrate is bound at residue Y124. The Nudix hydrolase domain maps to 125–248; the sequence is PQIAPCIIVA…TVARRLIEDT (124 aa). Positions 158, 174, and 178 each coordinate a divalent metal cation. Positions 159–180 match the Nudix box motif; sequence GFVEVGETLEQAVAREVMEESG. 192–199 provides a ligand contact to substrate; the sequence is QPWPFPQS. E219 is a binding site for a divalent metal cation. A241 contributes to the substrate binding site.

This sequence belongs to the Nudix hydrolase family. NudC subfamily. Homodimer. Mg(2+) serves as cofactor. Requires Mn(2+) as cofactor. It depends on Zn(2+) as a cofactor.

It catalyses the reaction a 5'-end NAD(+)-phospho-ribonucleoside in mRNA + H2O = a 5'-end phospho-adenosine-phospho-ribonucleoside in mRNA + beta-nicotinamide D-ribonucleotide + 2 H(+). The catalysed reaction is NAD(+) + H2O = beta-nicotinamide D-ribonucleotide + AMP + 2 H(+). The enzyme catalyses NADH + H2O = reduced beta-nicotinamide D-ribonucleotide + AMP + 2 H(+). Functionally, mRNA decapping enzyme that specifically removes the nicotinamide adenine dinucleotide (NAD) cap from a subset of mRNAs by hydrolyzing the diphosphate linkage to produce nicotinamide mononucleotide (NMN) and 5' monophosphate mRNA. The NAD-cap is present at the 5'-end of some mRNAs and stabilizes RNA against 5'-processing. Has preference for mRNAs with a 5'-end purine. Catalyzes the hydrolysis of a broad range of dinucleotide pyrophosphates. The chain is NAD-capped RNA hydrolase NudC from Shigella dysenteriae serotype 1 (strain Sd197).